The following is a 510-amino-acid chain: ETS translocation variant 5 (510 aa).

The segment at 132 to 245 (KPLTPPATPL…PGDSRPSYHR (114 aa)) is disordered. Residues 163 to 174 (TPGAGPVQGVGP) are compositionally biased toward low complexity. Positions 211-224 (QYPSEQRFQRQLSE) are enriched in polar residues. The residue at position 248 (S248) is a Phosphoserine. K350 participates in a covalent cross-link: Glycyl lysine isopeptide (Lys-Gly) (interchain with G-Cter in SUMO2). The ETS DNA-binding region spans 368-448 (LQLWQFLVTL…AGERYVYKFV (81 aa)).

This sequence belongs to the ETS family. In terms of assembly, interacts (via C-terminal) with ZMYM5 (via N-terminal 120 amino acid region). In terms of tissue distribution, in the brain, expressed predominantly in the cerebral cortex, the amygdala and the hypothalamus. Within the cerebral cortex, there is conspicuously high expression in cortical layers 2, 4 and 6 while expression is almost absent from layers 1, 3 and 5. High expression is also observed in the dorsal and ventral endopiriform claustrum. Strong expression is observed in limited parts of the amygdala including the basolateral amygdaloid nucleus, the bed stria terminalis and the central amygdaloid nucleus. Low to moderate levels are found in the hypothalamus while expression is almost absent in the thalamus. Hypothalamic expression is seen in the dorsomedial hypothalamic nucleus and also the central, dorsomedial and ventrolateral parts of the ventromedial hypothalamic nucleus. Strong expression is also identified in the nigrostriatal tract. In the mesencephalon, expression is restricted to the ventral tegmental area including the parabrachial pigmented nucleus. In the hippocampus, strongly expressed in the pyramidal cell layer. Some expression is also found in the lacunosum moleculare layer. Low levels of expression in the cerebellum, including the granular, molecular and Purkinje cell layers.

Its subcellular location is the nucleus. Functionally, binds to DNA sequences containing the consensus nucleotide core sequence 5'-GGAA.-3'. This Mus musculus (Mouse) protein is ETS translocation variant 5 (Etv5).